The sequence spans 135 residues: UPF0306 protein C8J_1355 (135 aa).

The protein belongs to the UPF0306 family.

The protein is UPF0306 protein C8J_1355 of Campylobacter jejuni subsp. jejuni serotype O:6 (strain 81116 / NCTC 11828).